The chain runs to 1092 residues: Probable arabinosyltransferase A (1092 aa).

13 helical membrane-spanning segments follow: residues 21 to 43 (IARL…VPLL), 214 to 233 (AVMV…LALL), 249 to 271 (GLWT…IVGA), 324 to 346 (VWMR…RCVL), 353 to 372 (VAAN…AAWL), 382 to 399 (PLIA…ENSI), 404 to 426 (LWPA…QGLI), 517 to 534 (FAVL…MVLL), 541 to 563 (GAVS…LLIL), 568 to 590 (WAIQ…AFAF), 602 to 624 (ALYV…GWFY), 639 to 661 (IAHY…LAGW), and 682 to 704 (ALAS…GSMV). The disordered stretch occupies residues 772–798 (PSGVSEHLEPEPVGTNPGTPNSEGPVD).

The protein belongs to the emb family.

The protein resides in the cell membrane. Its function is as follows. Arabinosyl transferase responsible for the polymerization of arabinose into the arabinan of arabinogalactan. The chain is Probable arabinosyltransferase A (embA) from Mycolicibacterium smegmatis (Mycobacterium smegmatis).